Consider the following 1157-residue polypeptide: MSIRFIIGRAGAGKTRACLEAIRKELLARPYGPPLILLVPEQATFQIEYALAATPGLSGFIRARVLSFRRLAYRVLREVGGAARAHIGELGKRMVLRRLLEQRRSELRVLGRSSGRPGFADTLARTLGEMKTYCIGPDELARAAFDLREKGGAALLADKLEDLAKLCFDLEDYLAGRFTDPDDYLNLLADCLELSAEVRGTEVWVDGFSGFTPQEYRVLAALARTASRVNITLCADPAALSGKIDETSLFFPVRETYDRLLKMALQERIPLERPLILGGNTARFKSPAISHLEKYFFVRPAPPCLNCSEGVVLAAAANPKAEAEGVAREITALCRDRGYRYRDIVILLRDVDSYAGLISSIFADHGIPVFIDQKRPVMHHPMVELVRSALEAVTEDWAFDPVFRYLKTDLVPLSREEVDLLENYVLAHGIRGSRWTDGRPWEYRRELTLEEDPGLNGSESVELEKVNRIRHQATADLLEFCRSFMQAKNVREMSTALFNLLTGLKVPEQLESWSRQAEKEGRLEAAREHSLVWSGFTALLDQVVEALGDEVLEPGEYAAVIDAGLESLRLGLIPPGLDQVLVASLERSRNPEMRAAFVMGVNDGVLPARTFDQGIFSDLERERLKAAGLELAPGGRRKFFEEQYLVYIALTRSSERIYLSYPLADGEGRALMPSPIVARVKELLPDVEERVWPVEPNAALLDDLEFVTGPRRTLSYLASQMREFKAGRRIDPLWWDVYSWFAAGEMREHCKRVLSGLFHSNREDRLPPAVSMALYGRPLRASVSGLEKFRACPFAHFLSYGLKLKERAIFKLDAPDLGRFFHAALKLFGDRVREQGLDWGQLDREQCQEMAGEVVDLLAPRLSSEILLSTARRRYLTGKLRRTVQRAALVLAEHSRRSKFRPVGLELSFGPDGDLPAPVFTLADGSEMAVSGRIDRIEAAPSDEGVYLRIIDFKSGKVTVKLTDIYHGLKLQLLAYLDVALEHARTLTGGNGLPGAVLYFRIDDPLVNTDGPVPPGEEVEREILKKLRMTGLVLADPKAVRLMDAGLDGISDLIPVQIKADGSFAARSAVLTREQFALLRSYLRFQLASAGSEIIGGTVEIAPYRKGRYRSCQSCPFRPVCQFDLLVDGNVYRSIKDEDEGAIWSKLGRMCRKGWGQ.

The 299-residue stretch at 1 to 299 (MSIRFIIGRA…SHLEKYFFVR (299 aa)) folds into the UvrD-like helicase ATP-binding domain. Residue 8 to 15 (GRAGAGKT) coordinates ATP. Residues 279–590 (GNTARFKSPA…LVASLERSRN (312 aa)) enclose the UvrD-like helicase C-terminal domain. Cys792, Cys1112, Cys1115, and Cys1121 together coordinate [4Fe-4S] cluster.

Belongs to the helicase family. AddB/RexB type 1 subfamily. In terms of assembly, heterodimer of AddA and AddB. Mg(2+) is required as a cofactor. [4Fe-4S] cluster serves as cofactor.

In terms of biological role, the heterodimer acts as both an ATP-dependent DNA helicase and an ATP-dependent, dual-direction single-stranded exonuclease. Recognizes the chi site generating a DNA molecule suitable for the initiation of homologous recombination. The AddB subunit has 5' -&gt; 3' nuclease activity but not helicase activity. The sequence is that of ATP-dependent helicase/deoxyribonuclease subunit B from Pelotomaculum thermopropionicum (strain DSM 13744 / JCM 10971 / SI).